The chain runs to 446 residues: Exodeoxyribonuclease 7 large subunit (446 aa).

This sequence belongs to the XseA family. As to quaternary structure, heterooligomer composed of large and small subunits.

It localises to the cytoplasm. The enzyme catalyses Exonucleolytic cleavage in either 5'- to 3'- or 3'- to 5'-direction to yield nucleoside 5'-phosphates.. In terms of biological role, bidirectionally degrades single-stranded DNA into large acid-insoluble oligonucleotides, which are then degraded further into small acid-soluble oligonucleotides. The protein is Exodeoxyribonuclease 7 large subunit of Streptococcus pneumoniae serotype 19F (strain G54).